Consider the following 467-residue polypeptide: Hydroxyacid-oxoacid transhydrogenase, mitochondrial (467 aa).

Lys445 bears the N6-acetyllysine mark. Ser452 is subject to Phosphoserine.

Belongs to the iron-containing alcohol dehydrogenase family. Hydroxyacid-oxoacid transhydrogenase subfamily. As to expression, only expressed in adult liver.

It is found in the mitochondrion. The catalysed reaction is (S)-3-hydroxybutanoate + 2-oxoglutarate = (R)-2-hydroxyglutarate + acetoacetate. It carries out the reaction 4-hydroxybutanoate + 2-oxoglutarate = (R)-2-hydroxyglutarate + succinate semialdehyde. Catalyzes the cofactor-independent reversible oxidation of gamma-hydroxybutyrate (GHB) to succinic semialdehyde (SSA) coupled to reduction of 2-ketoglutarate (2-KG) to D-2-hydroxyglutarate (D-2-HG). D,L-3-hydroxyisobutyrate and L-3-hydroxybutyrate (L-3-OHB) are also substrates for HOT with 10-fold lower activities. This Homo sapiens (Human) protein is Hydroxyacid-oxoacid transhydrogenase, mitochondrial (ADHFE1).